A 473-amino-acid chain; its full sequence is Trehalose-6-phosphate synthase (473 aa).

Arginine 10 provides a ligand contact to D-glucose 6-phosphate. 21-22 is a UDP-alpha-D-glucose binding site; sequence GG. Tyrosine 76 and aspartate 130 together coordinate D-glucose 6-phosphate. 2 residues coordinate UDP-alpha-D-glucose: arginine 262 and lysine 267. Arginine 300 provides a ligand contact to D-glucose 6-phosphate. UDP-alpha-D-glucose contacts are provided by residues phenylalanine 339 and 365-369; that span reads LVAKE. Positions 454–473 are disordered; sequence TPRSPERQQQNNVATFPKLA.

The protein belongs to the glycosyltransferase 20 family. In terms of assembly, homotetramer.

The enzyme catalyses D-glucose 6-phosphate + UDP-alpha-D-glucose = alpha,alpha-trehalose 6-phosphate + UDP + H(+). The protein operates within glycan biosynthesis; trehalose biosynthesis. Its function is as follows. Probably involved in the osmoprotection via the biosynthesis of trehalose. Catalyzes the transfer of glucose from UDP-alpha-D-glucose (UDP-Glc) to D-glucose 6-phosphate (Glc-6-P) to form trehalose-6-phosphate. Acts with retention of the anomeric configuration of the UDP-sugar donor. The polypeptide is Trehalose-6-phosphate synthase (Salmonella paratyphi A (strain ATCC 9150 / SARB42)).